The following is a 255-amino-acid chain: 5'-methylthioadenosine/S-adenosylhomocysteine nucleosidase (255 aa).

Glutamate 14 acts as the Proton acceptor in catalysis. Substrate-binding positions include glycine 80, leucine 176, and 196 to 197 (ME). Catalysis depends on aspartate 220, which acts as the Proton donor.

This sequence belongs to the PNP/UDP phosphorylase family. MtnN subfamily.

The catalysed reaction is S-adenosyl-L-homocysteine + H2O = S-(5-deoxy-D-ribos-5-yl)-L-homocysteine + adenine. It carries out the reaction S-methyl-5'-thioadenosine + H2O = 5-(methylsulfanyl)-D-ribose + adenine. It catalyses the reaction 5'-deoxyadenosine + H2O = 5-deoxy-D-ribose + adenine. It participates in amino-acid biosynthesis; L-methionine biosynthesis via salvage pathway; S-methyl-5-thio-alpha-D-ribose 1-phosphate from S-methyl-5'-thioadenosine (hydrolase route): step 1/2. Its function is as follows. Catalyzes the irreversible cleavage of the glycosidic bond in both 5'-methylthioadenosine (MTA) and S-adenosylhomocysteine (SAH/AdoHcy) to adenine and the corresponding thioribose, 5'-methylthioribose and S-ribosylhomocysteine, respectively. Also cleaves 5'-deoxyadenosine, a toxic by-product of radical S-adenosylmethionine (SAM) enzymes, into 5-deoxyribose and adenine. This Mycobacterium bovis (strain ATCC BAA-935 / AF2122/97) protein is 5'-methylthioadenosine/S-adenosylhomocysteine nucleosidase (mtnN).